A 482-amino-acid chain; its full sequence is 7-deoxyloganetic acid glucosyltransferase (482 aa).

H22 serves as the catalytic Proton acceptor. H22 is an an anthocyanidin binding site. Catalysis depends on D127, which acts as the Charge relay. 8 residues coordinate UDP-alpha-D-glucose: T149, A362, Q364, H379, W382, N383, S384, and E387. A402 lines the an anthocyanidin pocket. D403 and Q404 together coordinate UDP-alpha-D-glucose.

Belongs to the UDP-glycosyltransferase family. Expressed in leaves, roots and stems. Lower levels of expression in flowers. Preferentially expressed in internal phloem parenchyma cells.

The enzyme catalyses 7-deoxyloganetate + UDP-alpha-D-glucose = 7-deoxyloganate + UDP + H(+). Functionally, iridoid glucosyltransferase acting exclusively on 7-deoxyloganetic acid. No activity with 7-deoxyloganetin. Catalyzes the fourth to last step in secologanin biosynthesis. The sequence is that of 7-deoxyloganetic acid glucosyltransferase (UGT709C2) from Catharanthus roseus (Madagascar periwinkle).